A 51-amino-acid chain; its full sequence is Large ribosomal subunit protein bL33 (51 aa).

The protein belongs to the bacterial ribosomal protein bL33 family.

This is Large ribosomal subunit protein bL33 from Pseudoalteromonas translucida (strain TAC 125).